A 425-amino-acid chain; its full sequence is Serine hydroxymethyltransferase 2 (425 aa).

Residues Leu121 and 125-127 contribute to the (6S)-5,6,7,8-tetrahydrofolate site; that span reads GHL. Lys230 carries the N6-(pyridoxal phosphate)lysine modification.

Belongs to the SHMT family. As to quaternary structure, homodimer. Pyridoxal 5'-phosphate serves as cofactor.

Its subcellular location is the cytoplasm. The catalysed reaction is (6R)-5,10-methylene-5,6,7,8-tetrahydrofolate + glycine + H2O = (6S)-5,6,7,8-tetrahydrofolate + L-serine. Its pathway is one-carbon metabolism; tetrahydrofolate interconversion. The protein operates within amino-acid biosynthesis; glycine biosynthesis; glycine from L-serine: step 1/1. Functionally, catalyzes the reversible interconversion of serine and glycine with tetrahydrofolate (THF) serving as the one-carbon carrier. This reaction serves as the major source of one-carbon groups required for the biosynthesis of purines, thymidylate, methionine, and other important biomolecules. Also exhibits THF-independent aldolase activity toward beta-hydroxyamino acids, producing glycine and aldehydes, via a retro-aldol mechanism. The polypeptide is Serine hydroxymethyltransferase 2 (Mycobacterium bovis (strain ATCC BAA-935 / AF2122/97)).